The sequence spans 247 residues: Sensory rhodopsin-1 (247 aa).

The Extracellular portion of the chain corresponds to 1–4 (MTGA). Residues 5-26 (VSAAYWIAAVAFLVGLGITAAL) form a helical membrane-spanning segment. Residues 27 to 35 (YAKLGESED) are Cytoplasmic-facing. A helical transmembrane segment spans residues 36-57 (RGRLAALAVIPGFAGLAYAGMA). The Extracellular portion of the chain corresponds to 58–71 (LGIGTVTVNGAELV). The helical transmembrane segment at 72–93 (GLRYVDWIVTTPLLVGFIGYVA) threads the bilayer. Over 94-96 (GAS) the chain is Cytoplasmic. A helical membrane pass occupies residues 97–119 (RRAIAGVMLADALMIAFGAGAVV). The Extracellular portion of the chain corresponds to 120–123 (TGGT). Residues 124–151 (LKWVLFGVSSIFHVTLFAYLYVVFPRAV) traverse the membrane as a helical segment. The Cytoplasmic segment spans residues 152 to 154 (PDD). Residues 155–182 (PMQRGLFSLLKNHVGLLWLAYPFVWLMG) traverse the membrane as a helical segment. Residues 183–190 (PAGIGFTT) are Extracellular-facing. Residues 191 to 223 (GVGAALTYAFLDVLAKVPYVYFFYARRQAFTDV) form a helical membrane-spanning segment. At lysine 206 the chain carries N6-(retinylidene)lysine. The Cytoplasmic segment spans residues 224-247 (VSAATADREDATDAVGDGAPTAAD).

It belongs to the archaeal/bacterial/fungal opsin family. As to quaternary structure, interacts with HTR-I.

It is found in the cell membrane. Functionally, involved in the control of phototaxis. Mediates both photoattractant (in the orange light) and photophobic (in the near UV light) responses. The signal is then transmitted to the sensory rhodopsin I transducer (HTR-I). The chain is Sensory rhodopsin-1 (sop1) from Halobacterium sp. (strain SG1).